A 1822-amino-acid polypeptide reads, in one-letter code: Sperm flagellar protein 2 (1822 aa).

The Calponin-homology (CH) domain maps to 1-105; sequence MSEILCQWLN…LLYQLYIALQ (105 aa). Coiled-coil stretches lie at residues 227–260, 321–396, 732–758, and 871–909; these read KALE…KDLQ, AHEA…KQAK, NQAQ…KAQK, and CEKV…LAEL. 4 disordered regions span residues 896–1004, 1278–1327, 1664–1718, and 1803–1822; these read KEAE…VPQP, EEEK…EATP, SIPS…NNEK, and EHVQ…EEKK. The span at 911-920 shows a compositional bias: pro residues; that stretch reads LPTPPPAPPP. Composition is skewed to basic and acidic residues over residues 921-930 and 949-968; these read EPEKEKEIHQ and PHGK…ETAL. Over residues 975-987 the composition is skewed to low complexity; sequence KGKSSGGKVPVKK. 2 stretches are compositionally biased toward basic and acidic residues: residues 1278–1292 and 1303–1314; these read EEEK…KEKS and KEPPKKKQEDKK. The interaction with IFT20 stretch occupies residues 1324–1676; that stretch reads EATPVIVTTE…SAEKTSSTDA (353 aa). Positions 1686-1712 form a coiled coil; it reads EENAAREERKLKDDTEKREQKDEEIPE. The span at 1688-1708 shows a compositional bias: basic and acidic residues; the sequence is NAAREERKLKDDTEKREQKDE.

Interacts (via C-terminus) with IFT20. Interacts with DYNC1I2.

Its subcellular location is the cell projection. It is found in the cilium. The protein localises to the flagellum. It localises to the cytoplasm. The protein resides in the golgi apparatus. Its function is as follows. Required for correct axoneme development in spermatozoa. Important for normal development of the manchette and sperm head morphology. Essential for male fertility. Plays a role in localization of the intraflagellar transport protein IFT20 to the manchette, suggesting function as an adapter for dynein-mediated protein transport during spermatogenesis. Also plays a role in bone growth where it seems to be required for normal osteoblast differentiation. This is Sperm flagellar protein 2 (SPEF2) from Homo sapiens (Human).